The following is a 79-amino-acid chain: Major outer membrane lipoprotein Lpp 2 (79 aa).

Residues 1 to 21 form the signal peptide; sequence MNRTNQLILGAVVLGSTLLAG. The N-palmitoyl cysteine moiety is linked to residue Cys-22. The S-diacylglycerol cysteine moiety is linked to residue Cys-22. 2 repeats span residues 25 to 35 and 39 to 49; these read NAKIDQLSSDV and SAKVEQLSNDV. A coiled-coil region spans residues 28 to 69; that stretch reads IDQLSSDVQTLSAKVEQLSNDVNAMRSDVQAAKDDAARANQR. Lys-79 is modified (N6-murein peptidoglycan lysine).

The protein belongs to the Lpp family. In terms of assembly, homotrimer.

Its subcellular location is the cell outer membrane. It is found in the secreted. The protein localises to the cell wall. In terms of biological role, plays an important role in virulence. A highly abundant outer membrane lipoprotein that controls the distance between the inner and outer membranes. The only protein known to be covalently linked to the peptidoglycan network (PGN). Also non-covalently binds the PGN. The link between the cell outer membrane and PGN contributes to maintenance of the structural and functional integrity of the cell envelope, and maintains the correct distance between the PGN and the outer membrane. This chain is Major outer membrane lipoprotein Lpp 2, found in Salmonella typhimurium (strain LT2 / SGSC1412 / ATCC 700720).